Here is a 737-residue protein sequence, read N- to C-terminus: FYVE, RhoGEF and PH domain-containing protein 3 (737 aa).

Residues methionine 1 to glutamine 151 are disordered. Residues alanine 126–serine 136 are compositionally biased toward acidic residues. Serine 128 carries the phosphoserine modification. The 185-residue stretch at lysine 157–alanine 341 folds into the DH domain. The region spanning glutamate 370–glutamate 469 is the PH 1 domain. Positions glutamine 487–lysine 533 are disordered. The span at threonine 500–glutamate 512 shows a compositional bias: low complexity. Over residues glutamate 521–lysine 533 the composition is skewed to basic and acidic residues. The FYVE-type zinc-finger motif lies at aspartate 532–proline 588. Zn(2+) is bound by residues cysteine 538, cysteine 541, cysteine 555, cysteine 558, cysteine 563, cysteine 566, cysteine 580, and cysteine 583. 2 disordered regions span residues valine 589 to cysteine 620 and alanine 713 to proline 737. A PH 2 domain is found at proline 616–arginine 715.

The protein localises to the cytoplasm. The protein resides in the cytoskeleton. Functionally, promotes the formation of filopodia. May activate CDC42, a member of the Ras-like family of Rho- and Rac proteins, by exchanging bound GDP for free GTP. Plays a role in regulating the actin cytoskeleton and cell shape. This is FYVE, RhoGEF and PH domain-containing protein 3 (FGD3) from Pongo abelii (Sumatran orangutan).